Here is a 211-residue protein sequence, read N- to C-terminus: Probable calcium-binding protein CML11 (211 aa).

2 disordered regions span residues 1–22 (MSEPATTTPTPTPAGDHDAAAT) and 40–60 (SCSAQQQQQQQQQQEEPLGDD). Positions 44 to 53 (QQQQQQQQQQ) are enriched in low complexity. 4 consecutive EF-hand domains span residues 60 to 95 (DQLGELREIFRSFDRNGDGSLTQLELGSLLRSLGLK), 96 to 131 (PSTDELDSLIQRADTNSNGLIEFSEFVALVAPELLY), 136 to 171 (YSEDQIRRLFNIFDRDGNGFITAAELAHSMAKLGHA), and 172 to 207 (LTVKELTGMIKEADTDGDGRISFQEFSRAITAAAFD). 18 residues coordinate Ca(2+): Asp-73, Asn-75, Asp-77, Ser-79, Glu-84, Asp-109, Asn-111, Asn-113, Glu-120, Asp-149, Asp-151, Asn-153, Glu-160, Asp-185, Asp-187, Asp-189, Arg-191, and Glu-196.

In terms of biological role, potential calcium sensor. The polypeptide is Probable calcium-binding protein CML11 (CML11) (Oryza sativa subsp. japonica (Rice)).